The chain runs to 344 residues: Meiotic recombination protein DMC1 homolog A (344 aa).

Residue 133–140 participates in ATP binding; sequence GEFRSGKT. Arg-235 contacts dsDNA. 5 residues coordinate ssDNA: Arg-235, Phe-238, Arg-241, Arg-247, and Arg-315. Residues Arg-241 and Arg-247 each coordinate dsDNA.

It belongs to the RecA family. DMC1 subfamily. Expressed in pollen mother cells and root tips.

It is found in the nucleus. Recombinase that may participate in meiotic recombination, specifically in homologous strand assimilation, which is required for the resolution of meiotic double-strand breaks. Exhibits DNA-dependent ATPase activity when bound to single-stranded DNA (ssDNA). Mediates renaturation of homologous complementary strands as well as assimilation of single strands into homologous supercoiled duplexes leading to D-loop formation. Binds circular single-stranded DNA (ssDNA) and circular double-stranded DNA (dsDNA) in vitro. Catalyzes DNA homologous renaturation and DNA strand exchange. The rates of these activities are dependent on the state of ATP hydrolysis. Forms helical filaments along ssDNA and dsDNA, and promotes strand exchange between ssDNA and dsDNA with long DNA substrates of several thousand base pairs. The presence of the replication protein A is not required for this activity. Seems to be required for homologous pairing and subsequent chromosome segregation during male meiosis. May be not directly required for homologous pairing during male meiosis. Required for synaptonemal complex assembly and crossover formation. Functions redundantly with DMC1B. In Oryza sativa subsp. indica (Rice), this protein is Meiotic recombination protein DMC1 homolog A.